A 345-amino-acid chain; its full sequence is MSKQSLSYKDAGVDINAGNALVDRIKPHVKRTTRPEVIGGLGGFGALCALPTKYKEPVLVSGTDGVGTKLRLAIDLNKHDTIGIDLVAMCVNDLVVQGAEPLFFLDYYATGKLDVDVATDVVAGIAEGCVQSGCALIGGETAEMPGMYHAGDYDLGGFCVGVVERAKIIDGSKVKTGDALIALGSSGPHSNGYSLIRKVIEVAGVNPATEQLAGRPLADQVLAPTKIYVKSVLELIEHVDVHAIAHLTGGGFWENIPRVLPEDVKVVINENSWEWQPVFKWLQEQGNITRHEMYRTFNCGVGMVIALPQADAEKALQVLKAAGENAWLIGQVEPLNAGEEQVIIR.

This sequence belongs to the AIR synthase family.

The protein resides in the cytoplasm. The enzyme catalyses 2-formamido-N(1)-(5-O-phospho-beta-D-ribosyl)acetamidine + ATP = 5-amino-1-(5-phospho-beta-D-ribosyl)imidazole + ADP + phosphate + H(+). It functions in the pathway purine metabolism; IMP biosynthesis via de novo pathway; 5-amino-1-(5-phospho-D-ribosyl)imidazole from N(2)-formyl-N(1)-(5-phospho-D-ribosyl)glycinamide: step 2/2. This chain is Phosphoribosylformylglycinamidine cyclo-ligase, found in Mannheimia succiniciproducens (strain KCTC 0769BP / MBEL55E).